Reading from the N-terminus, the 83-residue chain is Small ribosomal subunit protein bS16 (83 aa).

The protein belongs to the bacterial ribosomal protein bS16 family.

The chain is Small ribosomal subunit protein bS16 from Pseudomonas aeruginosa (strain UCBPP-PA14).